We begin with the raw amino-acid sequence, 145 residues long: 3-hydroxyacyl-[acyl-carrier-protein] dehydratase FabZ (145 aa).

His-47 is a catalytic residue.

This sequence belongs to the thioester dehydratase family. FabZ subfamily.

It localises to the cytoplasm. It catalyses the reaction a (3R)-hydroxyacyl-[ACP] = a (2E)-enoyl-[ACP] + H2O. Functionally, involved in unsaturated fatty acids biosynthesis. Catalyzes the dehydration of short chain beta-hydroxyacyl-ACPs and long chain saturated and unsaturated beta-hydroxyacyl-ACPs. The sequence is that of 3-hydroxyacyl-[acyl-carrier-protein] dehydratase FabZ from Geotalea uraniireducens (strain Rf4) (Geobacter uraniireducens).